The following is a 363-amino-acid chain: 3-dehydroquinate synthase (363 aa).

Residues 72-77, 130-131, Lys142, and Lys151 contribute to the NAD(+) site; these read SGEKEK and TT. Positions 184, 247, and 264 each coordinate Zn(2+).

This sequence belongs to the sugar phosphate cyclases superfamily. Dehydroquinate synthase family. Co(2+) is required as a cofactor. The cofactor is Zn(2+). It depends on NAD(+) as a cofactor.

The protein resides in the cytoplasm. It catalyses the reaction 7-phospho-2-dehydro-3-deoxy-D-arabino-heptonate = 3-dehydroquinate + phosphate. The protein operates within metabolic intermediate biosynthesis; chorismate biosynthesis; chorismate from D-erythrose 4-phosphate and phosphoenolpyruvate: step 2/7. Its function is as follows. Catalyzes the conversion of 3-deoxy-D-arabino-heptulosonate 7-phosphate (DAHP) to dehydroquinate (DHQ). This Bacillus thuringiensis subsp. konkukian (strain 97-27) protein is 3-dehydroquinate synthase.